The primary structure comprises 459 residues: DIMBOA UDP-glucosyltransferase BX8 (459 aa).

Residue His19 is the Proton acceptor of the active site. His19 is a binding site for an anthocyanidin. Asp119 acts as the Charge relay in catalysis. Positions 141, 340, 342, 357, 360, 361, 362, and 365 each coordinate UDP-alpha-D-glucose. Gly380 lines the an anthocyanidin pocket. 2 residues coordinate UDP-alpha-D-glucose: Asp381 and Gln382.

It belongs to the UDP-glycosyltransferase family. Mg(2+) serves as cofactor. The cofactor is Ca(2+). As to expression, expressed at the same levels in roots and shoots.

The enzyme catalyses DIMBOA + UDP-alpha-D-glucose = DIMBOA beta-D-glucoside + UDP + H(+). It carries out the reaction DIBOA + UDP-alpha-D-glucose = DIBOA beta-D-glucoside + UDP + H(+). Its function is as follows. Glucosyltransferase involved in the last step of benzoxazinoid glucoside biosynthesis. Catalyzes the glucosylation of hydroxamic acids utilizing UDP-glucose as glucose doner, reducing the toxicity of these natural insecticides for storage. Can use DIMBOA and DIBOA as substrates, HMBOA (2-hydroxy-7-methoxy-2H-1,4-benzoxazin-3(4H)-one) and HBOA (2-hydroxy-2H-1,4-benzoxazin-3(4H)-one) with a lower efficiency, but not indole acetic acid or quercitin. The chain is DIMBOA UDP-glucosyltransferase BX8 (Bx8) from Zea mays (Maize).